The chain runs to 62 residues: MIGGLGWGELLIILIIVIAIFGAGKLAGLGGALGSSIREFRKAVKGDDEPRSDAKTEGETKV.

The chain crosses the membrane as a helical span at residues 10 to 32; the sequence is LLIILIIVIAIFGAGKLAGLGGA.

This sequence belongs to the TatA/E family. As to quaternary structure, forms a complex with TatC.

Its subcellular location is the cell membrane. Part of the twin-arginine translocation (Tat) system that transports large folded proteins containing a characteristic twin-arginine motif in their signal peptide across membranes. TatA could form the protein-conducting channel of the Tat system. This is Sec-independent protein translocase protein TatA from Chloroflexus aurantiacus (strain ATCC 29366 / DSM 635 / J-10-fl).